The chain runs to 145 residues: Large ribosomal subunit protein uL11 (145 aa).

This sequence belongs to the universal ribosomal protein uL11 family. Part of the ribosomal stalk of the 50S ribosomal subunit. Interacts with L10 and the large rRNA to form the base of the stalk. L10 forms an elongated spine to which L12 dimers bind in a sequential fashion forming a multimeric L10(L12)X complex. In terms of processing, one or more lysine residues are methylated.

In terms of biological role, forms part of the ribosomal stalk which helps the ribosome interact with GTP-bound translation factors. In Coxiella burnetii (strain Dugway 5J108-111), this protein is Large ribosomal subunit protein uL11.